The primary structure comprises 455 residues: F-box/LRR-repeat protein At5g35995 (455 aa).

The region spanning 4 to 51 is the F-box domain; it reads RDFISSLPDEVLGKKILSLLPTKLVVSTSVLSKRWRNLFHFVDSFDLE. 5 LRR repeats span residues 114-138, 152-176, 282-305, 308-324, and 325-348; these read DHYL…SYRT, FPAL…LISG, IRNV…CYTM, FDKL…ENGW, and QALP…LLHK.

The sequence is that of F-box/LRR-repeat protein At5g35995 from Arabidopsis thaliana (Mouse-ear cress).